Consider the following 473-residue polypeptide: Trigger factor (473 aa).

The 88-residue stretch at 174 to 261 folds into the PPIase FKBP-type domain; it reads GDIAVVSFKG…LKDLKEKELP (88 aa). Positions 437-473 are disordered; the sequence is EISEKVTKSTTKSKTKSKTKKESQAKSEPNKKKKEKK. Over residues 456–466 the composition is skewed to basic and acidic residues; sequence KKESQAKSEPN.

It belongs to the FKBP-type PPIase family. Tig subfamily.

It is found in the cytoplasm. The enzyme catalyses [protein]-peptidylproline (omega=180) = [protein]-peptidylproline (omega=0). Its function is as follows. Involved in protein export. Acts as a chaperone by maintaining the newly synthesized protein in an open conformation. Functions as a peptidyl-prolyl cis-trans isomerase. This chain is Trigger factor, found in Prochlorococcus marinus (strain MIT 9515).